The primary structure comprises 720 residues: Methionine--tRNA ligase (720 aa).

A 'HIGH' region motif is present at residues 27 to 37; the sequence is PYANGQIHIGH. Zn(2+) is bound by residues Cys158, Cys161, Cys171, and Cys174. Residues 348-352 carry the 'KMSKS' region motif; it reads KMSKS. Lys351 provides a ligand contact to ATP. The tRNA-binding domain occupies 614 to 720; it reads DFAKIDLRIA…SGAKPGMRVK (107 aa).

Belongs to the class-I aminoacyl-tRNA synthetase family. MetG type 1 subfamily. Homodimer. Zn(2+) is required as a cofactor.

Its subcellular location is the cytoplasm. The catalysed reaction is tRNA(Met) + L-methionine + ATP = L-methionyl-tRNA(Met) + AMP + diphosphate. Its function is as follows. Is required not only for elongation of protein synthesis but also for the initiation of all mRNA translation through initiator tRNA(fMet) aminoacylation. The sequence is that of Methionine--tRNA ligase from Burkholderia lata (strain ATCC 17760 / DSM 23089 / LMG 22485 / NCIMB 9086 / R18194 / 383).